The following is a 285-amino-acid chain: Formamidopyrimidine-DNA glycosylase (285 aa).

Proline 2 acts as the Schiff-base intermediate with DNA in catalysis. Catalysis depends on glutamate 3, which acts as the Proton donor. Residue lysine 61 is the Proton donor; for beta-elimination activity of the active site. Positions 102, 121, and 163 each coordinate DNA. The FPG-type zinc-finger motif lies at 249–283 (NAYGQAGKPCARCGTPIARETFMNRGSHFCNRCQK). Catalysis depends on arginine 273, which acts as the Proton donor; for delta-elimination activity.

Belongs to the FPG family. As to quaternary structure, monomer. Zn(2+) is required as a cofactor.

The catalysed reaction is Hydrolysis of DNA containing ring-opened 7-methylguanine residues, releasing 2,6-diamino-4-hydroxy-5-(N-methyl)formamidopyrimidine.. The enzyme catalyses 2'-deoxyribonucleotide-(2'-deoxyribose 5'-phosphate)-2'-deoxyribonucleotide-DNA = a 3'-end 2'-deoxyribonucleotide-(2,3-dehydro-2,3-deoxyribose 5'-phosphate)-DNA + a 5'-end 5'-phospho-2'-deoxyribonucleoside-DNA + H(+). In terms of biological role, involved in base excision repair of DNA damaged by oxidation or by mutagenic agents. Acts as a DNA glycosylase that recognizes and removes damaged bases. Has a preference for oxidized purines, such as 7,8-dihydro-8-oxoguanine (8-oxoG). Has AP (apurinic/apyrimidinic) lyase activity and introduces nicks in the DNA strand. Cleaves the DNA backbone by beta-delta elimination to generate a single-strand break at the site of the removed base with both 3'- and 5'-phosphates. This chain is Formamidopyrimidine-DNA glycosylase, found in Corynebacterium efficiens (strain DSM 44549 / YS-314 / AJ 12310 / JCM 11189 / NBRC 100395).